The chain runs to 245 residues: Octanoyltransferase (245 aa).

The BPL/LPL catalytic domain occupies 54 to 238 (GEATELVWLL…AFENIFGETR (185 aa)). Substrate contacts are provided by residues 92-99 (RGGQLTYH), 167-169 (AIG), and 180-182 (GIA). Cys-198 serves as the catalytic Acyl-thioester intermediate.

This sequence belongs to the LipB family.

Its subcellular location is the cytoplasm. It catalyses the reaction octanoyl-[ACP] + L-lysyl-[protein] = N(6)-octanoyl-L-lysyl-[protein] + holo-[ACP] + H(+). Its pathway is protein modification; protein lipoylation via endogenous pathway; protein N(6)-(lipoyl)lysine from octanoyl-[acyl-carrier-protein]: step 1/2. Catalyzes the transfer of endogenously produced octanoic acid from octanoyl-acyl-carrier-protein onto the lipoyl domains of lipoate-dependent enzymes. Lipoyl-ACP can also act as a substrate although octanoyl-ACP is likely to be the physiological substrate. The polypeptide is Octanoyltransferase (Rhodopseudomonas palustris (strain TIE-1)).